We begin with the raw amino-acid sequence, 167 residues long: Small ribosomal subunit protein uS5 (167 aa).

The S5 DRBM domain occupies L12–V75.

Belongs to the universal ribosomal protein uS5 family. Part of the 30S ribosomal subunit. Contacts proteins S4 and S8.

Its function is as follows. With S4 and S12 plays an important role in translational accuracy. Functionally, located at the back of the 30S subunit body where it stabilizes the conformation of the head with respect to the body. The protein is Small ribosomal subunit protein uS5 of Halorhodospira halophila (strain DSM 244 / SL1) (Ectothiorhodospira halophila (strain DSM 244 / SL1)).